The following is a 303-amino-acid chain: Phosphatidylglycerol--prolipoprotein diacylglyceryl transferase (303 aa).

Transmembrane regions (helical) follow at residues Leu18–Leu38, Leu58–Glu78, Ile106–Phe126, and Glu133–Gly153. A 1,2-diacyl-sn-glycero-3-phospho-(1'-sn-glycerol) is bound at residue Arg154. 3 consecutive transmembrane segments (helical) span residues Pro193–Phe213, Leu223–Ile243, and Ile266–Tyr286.

It belongs to the Lgt family.

It localises to the cell inner membrane. The enzyme catalyses L-cysteinyl-[prolipoprotein] + a 1,2-diacyl-sn-glycero-3-phospho-(1'-sn-glycerol) = an S-1,2-diacyl-sn-glyceryl-L-cysteinyl-[prolipoprotein] + sn-glycerol 1-phosphate + H(+). It participates in protein modification; lipoprotein biosynthesis (diacylglyceryl transfer). Functionally, catalyzes the transfer of the diacylglyceryl group from phosphatidylglycerol to the sulfhydryl group of the N-terminal cysteine of a prolipoprotein, the first step in the formation of mature lipoproteins. This chain is Phosphatidylglycerol--prolipoprotein diacylglyceryl transferase, found in Prochlorococcus marinus (strain NATL2A).